Consider the following 418-residue polypeptide: S-adenosylmethionine synthase (418 aa).

An ATP-binding site is contributed by histidine 16. Aspartate 18 provides a ligand contact to Mg(2+). Glutamate 44 contributes to the K(+) binding site. Residues glutamate 57 and glutamine 100 each coordinate L-methionine. Positions 100–110 (QSPDIAQGVDS) are flexible loop. ATP-binding positions include 174–176 (DGK), aspartate 259, 265–266 (RK), alanine 282, and lysine 286. Aspartate 259 lines the L-methionine pocket. Lysine 290 serves as a coordination point for L-methionine.

This sequence belongs to the AdoMet synthase family. Homotetramer; dimer of dimers. Mg(2+) serves as cofactor. The cofactor is K(+).

The protein resides in the cytoplasm. The enzyme catalyses L-methionine + ATP + H2O = S-adenosyl-L-methionine + phosphate + diphosphate. It participates in amino-acid biosynthesis; S-adenosyl-L-methionine biosynthesis; S-adenosyl-L-methionine from L-methionine: step 1/1. Its function is as follows. Catalyzes the formation of S-adenosylmethionine (AdoMet) from methionine and ATP. The overall synthetic reaction is composed of two sequential steps, AdoMet formation and the subsequent tripolyphosphate hydrolysis which occurs prior to release of AdoMet from the enzyme. The polypeptide is S-adenosylmethionine synthase (Acaryochloris marina (strain MBIC 11017)).